We begin with the raw amino-acid sequence, 251 residues long: Elongator complex protein 6 (251 aa).

This sequence belongs to the ELP6 family. As to quaternary structure, component of the elongator complex composed of Elp1, Elp2, Elp3, Elp4, Elp5 and Elp6. The elongator complex associates with and stabilizes microtubules; efficient interaction requires the full complex. Interacts with InR/Insulin-like receptor; the interaction may stabilize Elp6.

The protein localises to the cytoplasm. It localises to the nucleus. Its subcellular location is the cytoskeleton. It is found in the spindle. It participates in tRNA modification; 5-methoxycarbonylmethyl-2-thiouridine-tRNA biosynthesis. Functionally, component of the elongator complex, which is required for multiple tRNA modifications, including mcm5U (5-methoxycarbonylmethyl uridine), mcm5s2U (5-methoxycarbonylmethyl-2-thiouridine), and ncm5U (5-carbamoylmethyl uridine). The elongator complex catalyzes formation of carboxymethyluridine in the wobble base at position 34 in tRNAs. Binding by the elongator complex stabilizes microtubules and promotes their growth. This induces central spindle asymmetry, promoting polarized signaling endosome trafficking during asymmetric cell division and cell fate assignation of sensory organ precursor cells. Required in germ line cells for microtubule organization involved in oocyte polarization and chromosome organization. Involved in InR-TOR (insulin-like receptor-target of rapamycin) signaling regulation of cellular metabolism, autophagy and apoptosis. This chain is Elongator complex protein 6, found in Drosophila melanogaster (Fruit fly).